The chain runs to 473 residues: Photosystem II CP43 reaction center protein (473 aa).

Residues 1-14 (MKTLYSLRRFYPVE) constitute a propeptide that is removed on maturation. Position 15 is an N-acetylthreonine (Thr15). Thr15 is subject to Phosphothreonine. A run of 5 helical transmembrane segments spans residues 69–93 (LFEV…PHLA), 134–155 (LLGP…KDRN), 178–200 (KALY…RRIT), 255–275 (KPFA…LSYS), and 291–312 (WFNN…ASQA). Glu367 provides a ligand contact to [CaMn4O5] cluster. The helical transmembrane segment at 447–471 (RARAAAAGFEKGIDRDFEPVLFMTP) threads the bilayer.

It belongs to the PsbB/PsbC family. PsbC subfamily. In terms of assembly, PSII is composed of 1 copy each of membrane proteins PsbA, PsbB, PsbC, PsbD, PsbE, PsbF, PsbH, PsbI, PsbJ, PsbK, PsbL, PsbM, PsbT, PsbX, PsbY, PsbZ, Psb30/Ycf12, at least 3 peripheral proteins of the oxygen-evolving complex and a large number of cofactors. It forms dimeric complexes. Binds multiple chlorophylls and provides some of the ligands for the Ca-4Mn-5O cluster of the oxygen-evolving complex. It may also provide a ligand for a Cl- that is required for oxygen evolution. PSII binds additional chlorophylls, carotenoids and specific lipids. is required as a cofactor.

Its subcellular location is the plastid. The protein resides in the chloroplast thylakoid membrane. One of the components of the core complex of photosystem II (PSII). It binds chlorophyll and helps catalyze the primary light-induced photochemical processes of PSII. PSII is a light-driven water:plastoquinone oxidoreductase, using light energy to abstract electrons from H(2)O, generating O(2) and a proton gradient subsequently used for ATP formation. This chain is Photosystem II CP43 reaction center protein, found in Nuphar advena (Common spatterdock).